A 273-amino-acid chain; its full sequence is Sulfur carrier protein FdhD (273 aa).

Residue Cys124 is the Cysteine persulfide intermediate of the active site. 263–268 (FCRQSR) contacts Mo-bis(molybdopterin guanine dinucleotide).

Belongs to the FdhD family.

The protein resides in the cytoplasm. Required for formate dehydrogenase (FDH) activity. Acts as a sulfur carrier protein that transfers sulfur from IscS to the molybdenum cofactor prior to its insertion into FDH. The polypeptide is Sulfur carrier protein FdhD (Acinetobacter baylyi (strain ATCC 33305 / BD413 / ADP1)).